We begin with the raw amino-acid sequence, 208 residues long: Small ribosomal subunit protein uS4 (208 aa).

In terms of domain architecture, S4 RNA-binding spans 98–159 (RRLDNVAYRL…KSRKVAAISE (62 aa)).

It belongs to the universal ribosomal protein uS4 family. In terms of assembly, part of the 30S ribosomal subunit. Contacts protein S5. The interaction surface between S4 and S5 is involved in control of translational fidelity.

Functionally, one of the primary rRNA binding proteins, it binds directly to 16S rRNA where it nucleates assembly of the body of the 30S subunit. With S5 and S12 plays an important role in translational accuracy. The polypeptide is Small ribosomal subunit protein uS4 (Geobacter sp. (strain M21)).